The primary structure comprises 242 residues: Large ribosomal subunit protein uL30y (242 aa).

This sequence belongs to the universal ribosomal protein uL30 family.

The protein is Large ribosomal subunit protein uL30y (RPL7B) of Arabidopsis thaliana (Mouse-ear cress).